A 474-amino-acid chain; its full sequence is ATP synthase subunit beta (474 aa).

158-165 (GGAGVGKT) provides a ligand contact to ATP.

The protein belongs to the ATPase alpha/beta chains family. In terms of assembly, F-type ATPases have 2 components, CF(1) - the catalytic core - and CF(0) - the membrane proton channel. CF(1) has five subunits: alpha(3), beta(3), gamma(1), delta(1), epsilon(1). CF(0) has three main subunits: a(1), b(2) and c(9-12). The alpha and beta chains form an alternating ring which encloses part of the gamma chain. CF(1) is attached to CF(0) by a central stalk formed by the gamma and epsilon chains, while a peripheral stalk is formed by the delta and b chains.

The protein resides in the cell membrane. The catalysed reaction is ATP + H2O + 4 H(+)(in) = ADP + phosphate + 5 H(+)(out). Produces ATP from ADP in the presence of a proton gradient across the membrane. The catalytic sites are hosted primarily by the beta subunits. This is ATP synthase subunit beta from Tropheryma whipplei (strain Twist) (Whipple's bacillus).